The chain runs to 165 residues: Phosphopantetheine adenylyltransferase (165 aa).

A substrate-binding site is contributed by Ser10. ATP is bound by residues 10–11 (SF) and His18. Substrate is bound by residues Lys42, Thr79, and Arg93. ATP is bound by residues 94 to 96 (GLR), Glu104, and 129 to 135 (VRPITAT).

The protein belongs to the bacterial CoaD family. In terms of assembly, homohexamer. The cofactor is Mg(2+).

Its subcellular location is the cytoplasm. It carries out the reaction (R)-4'-phosphopantetheine + ATP + H(+) = 3'-dephospho-CoA + diphosphate. It functions in the pathway cofactor biosynthesis; coenzyme A biosynthesis; CoA from (R)-pantothenate: step 4/5. In terms of biological role, reversibly transfers an adenylyl group from ATP to 4'-phosphopantetheine, yielding dephospho-CoA (dPCoA) and pyrophosphate. The protein is Phosphopantetheine adenylyltransferase of Nitrobacter winogradskyi (strain ATCC 25391 / DSM 10237 / CIP 104748 / NCIMB 11846 / Nb-255).